Here is a 108-residue protein sequence, read N- to C-terminus: Ferredoxin, plant-type (108 aa).

The 92-residue stretch at 5 to 96 (FEITVQPGGE…DLCIERYSKP (92 aa)) folds into the 2Fe-2S ferredoxin-type domain. [2Fe-2S] cluster is bound by residues cysteine 40, cysteine 45, cysteine 48, and cysteine 80.

It belongs to the 2Fe2S plant-type ferredoxin family.

It functions in the pathway aromatic compound metabolism; catechol degradation. Its function is as follows. Ferredoxins are iron-sulfur proteins that transfer electrons in a wide variety of metabolic reactions. The protein is Ferredoxin, plant-type (nahT) of Pseudomonas putida (Arthrobacter siderocapsulatus).